A 246-amino-acid polypeptide reads, in one-letter code: tRNA (guanine-N(7)-)-methyltransferase (246 aa).

S-adenosyl-L-methionine is bound by residues glutamate 77, glutamate 102, aspartate 129, and aspartate 152. The active site involves aspartate 152. Substrate is bound by residues lysine 156, aspartate 188, and 225–228 (TKFE).

This sequence belongs to the class I-like SAM-binding methyltransferase superfamily. TrmB family.

The enzyme catalyses guanosine(46) in tRNA + S-adenosyl-L-methionine = N(7)-methylguanosine(46) in tRNA + S-adenosyl-L-homocysteine. It participates in tRNA modification; N(7)-methylguanine-tRNA biosynthesis. Catalyzes the formation of N(7)-methylguanine at position 46 (m7G46) in tRNA. This chain is tRNA (guanine-N(7)-)-methyltransferase, found in Haemophilus influenzae (strain 86-028NP).